The sequence spans 54 residues: Apelin receptor early endogenous ligand (54 aa).

A signal peptide spans 1–22 (MRFQQFLFAFFIFIMSLLLISG). Asn-27 is a glycosylation site (N-linked (GlcNAc...) asparagine).

Belongs to the Elabela/Toddler family. As to quaternary structure, interacts with APLNR. As to expression, expressed in the intima of blood vessels. Expressed in endothelial cells in blood vessels in the heart and lung. Expressed in cytotrophoblasts and syncytiotrophoblasts of first-trimester placental tissue and term placentas (at protein level). Not detected in smooth muscle cells or cardiomyocytes (at protein level). Expressed in kidney. Expressed in blood vessels. Expressed in embryonic (ESCs) and induced (iPSCs) pluripotent stem cells. Most highly expressed in undifferentiated embryonic stem cell and is rapidly down-regulated during differentiation.

Its subcellular location is the secreted. The protein localises to the extracellular space. In terms of biological role, peptide hormone that functions as endogenous ligand for the G-protein-coupled apelin receptor (APLNR/APJ), that plays a role in the regulation of normal cardiovascular function and fluid homeostasis. Functions as a balanced agonist activating both G(i) protein pathway and beta-arrestin pathway of APLNR. Downstream G proteins activation, apelin can inhibit cAMP production and activate key intracellular effectors such as ERKs. On the other hand, APLNR activation induces beta-arrestin recruitment to the membrane leading to desensitization and internalization of the receptor. Required for mesendodermal differentiation, blood vessels formation and heart morphogenesis during early development and for adult cardiovascular homeostasis. Acts as a motogen by promoting mesendodermal cell migration during gastrulation by binding and activating APLNR. Acts as an early embryonic regulator of cellular movement with a role in migration and development of cardiac progenitor cells. May act as a chemoattractant for the activation of angioblast migration toward the embryonic midline, i.e. the position of the future vessel formation, during vasculogenesis. Positively regulates sinus venosus (SV)-derived endothelial cells migration into the developing heart to promote coronary blood vessel sprouting. Plays a role in placental vascular development; promotes placental trophoblast invasion and spiral artery remodeling in the uterus. Involved in the regulation of maternal cardiovascular homeostasis to prevent gestational hypertension and for potent cardioprotective functions during heart failure. Mediates myocardial contractility in an ERK1/2-dependent manner. The polypeptide is Apelin receptor early endogenous ligand (Homo sapiens (Human)).